The chain runs to 54 residues: UPF0391 membrane protein Oant_1245 (54 aa).

Helical transmembrane passes span 5 to 25 (ALVF…GIAG) and 29 to 48 (GIAQ…SLIA).

The protein belongs to the UPF0391 family.

Its subcellular location is the cell membrane. The polypeptide is UPF0391 membrane protein Oant_1245 (Brucella anthropi (strain ATCC 49188 / DSM 6882 / CCUG 24695 / JCM 21032 / LMG 3331 / NBRC 15819 / NCTC 12168 / Alc 37) (Ochrobactrum anthropi)).